The following is a 131-amino-acid chain: Large ribosomal subunit protein bL12 (131 aa).

Belongs to the bacterial ribosomal protein bL12 family. In terms of assembly, homodimer. Part of the ribosomal stalk of the 50S ribosomal subunit. Forms a multimeric L10(L12)X complex, where L10 forms an elongated spine to which 2 to 4 L12 dimers bind in a sequential fashion. Binds GTP-bound translation factors.

Its function is as follows. Forms part of the ribosomal stalk which helps the ribosome interact with GTP-bound translation factors. Is thus essential for accurate translation. The sequence is that of Large ribosomal subunit protein bL12 from Nocardioides sp. (strain ATCC BAA-499 / JS614).